The following is a 285-amino-acid chain: Acetylglutamate kinase (285 aa).

Substrate-binding positions include 64–65 (GG), Arg-86, and Asn-180.

Belongs to the acetylglutamate kinase family. ArgB subfamily.

It localises to the plastid. It is found in the chloroplast. It catalyses the reaction N-acetyl-L-glutamate + ATP = N-acetyl-L-glutamyl 5-phosphate + ADP. It functions in the pathway amino-acid biosynthesis; L-arginine biosynthesis; N(2)-acetyl-L-ornithine from L-glutamate: step 2/4. Functionally, catalyzes the ATP-dependent phosphorylation of N-acetyl-L-glutamate. The sequence is that of Acetylglutamate kinase from Gracilaria tenuistipitata var. liui (Red alga).